A 950-amino-acid chain; its full sequence is Glycine dehydrogenase (decarboxylating) (950 aa).

At Lys-698 the chain carries N6-(pyridoxal phosphate)lysine.

This sequence belongs to the GcvP family. In terms of assembly, the glycine cleavage system is composed of four proteins: P, T, L and H. Pyridoxal 5'-phosphate is required as a cofactor.

It carries out the reaction N(6)-[(R)-lipoyl]-L-lysyl-[glycine-cleavage complex H protein] + glycine + H(+) = N(6)-[(R)-S(8)-aminomethyldihydrolipoyl]-L-lysyl-[glycine-cleavage complex H protein] + CO2. Its function is as follows. The glycine cleavage system catalyzes the degradation of glycine. The P protein binds the alpha-amino group of glycine through its pyridoxal phosphate cofactor; CO(2) is released and the remaining methylamine moiety is then transferred to the lipoamide cofactor of the H protein. This is Glycine dehydrogenase (decarboxylating) from Neisseria gonorrhoeae (strain ATCC 700825 / FA 1090).